Consider the following 241-residue polypeptide: Fatty acid metabolism regulator protein (241 aa).

In terms of domain architecture, HTH gntR-type spans 11 to 79; sequence QSPAGLAEEY…HGKPTKVNNI (69 aa). A DNA-binding region (H-T-H motif) is located at residues 39–58; it reads ERELAEKIGVTRTTLREVLQ.

Homodimer.

It is found in the cytoplasm. Functionally, multifunctional regulator of fatty acid metabolism. This Pasteurella multocida (strain Pm70) protein is Fatty acid metabolism regulator protein.